The primary structure comprises 533 residues: Basal body-orientation factor 1 (533 aa).

The segment at 1-30 is disordered; it reads MPAKDKRKDKRKDKRKGKNKGKEPKKIIKS. Basic residues predominate over residues 7–19; that stretch reads RKDKRKDKRKGKN. The span at 20-30 shows a compositional bias: basic and acidic residues; that stretch reads KGKEPKKIIKS. Coiled coils occupy residues 34–207 and 246–368; these read AIER…EAEK and LKEA…VEQF. Residues 277 to 533 form an interaction with MNS1 and ODF2 region; the sequence is VKEKIMQLTQ…PQGLQDSDIA (257 aa). The segment covering 507–517 has biased composition (polar residues); the sequence is QQAPVSDSNRM. Positions 507–533 are disordered; it reads QQAPVSDSNRMVSPDVIPQGLQDSDIA.

Belongs to the BBOF1 family. Interacts with MNS1 and ODF2. Expressed exclusively in the testis and predominantly expressed in male germ cells.

It is found in the cytoplasm. It localises to the cytoskeleton. The protein localises to the cilium basal body. The protein resides in the flagellum axoneme. Its function is as follows. Plays an essential role in sperm motility and male fertility by stabilizing the sperm flagellar axonemal structure. May be required for the stability of ODF2 and MANS1 proteins. Dispensable for the assembly and function of motile cilia. The polypeptide is Basal body-orientation factor 1 (Mus musculus (Mouse)).